A 358-amino-acid polypeptide reads, in one-letter code: Extracellular phospholipase C (358 aa).

The protein localises to the secreted. The sequence is that of Extracellular phospholipase C (plcA) from Dickeya chrysanthemi (Pectobacterium chrysanthemi).